A 213-amino-acid chain; its full sequence is MALEICVKAAVGAPDHLGDCPFSQRALLTLEEKSLTYKIHLINLSDKPQWFLDISPQGKVPVLKIDDKWVTDSDVIVGILEEKYPDPPLKTPAEFASVGSNIFGTFGTFLKSKDSNDGSEHALLVELEALENHLKSHDGPFIAGERVSAVDLSLAPKLYHLQVALGHFKSWSVPESFPHVHNYMKTLFSLDSFEKTKTEEKYVISGWAPKVNP.

Residues K8 and D19 each coordinate glutathione. Residues K8 and D19 each coordinate L-ascorbate. One can recognise a GST N-terminal domain in the interval 10 to 83 (AVGAPDHLGD…DVIVGILEEK (74 aa)). The active-site Nucleophile is C20. C20 is subject to S-glutathionyl cysteine. The Glutathione-binding signature appears at 20-25 (CPFSQR). The glutathione site is built by K47, V60, and S73. The GST C-terminal domain maps to 84–213 (YPDPPLKTPA…ISGWAPKVNP (130 aa)). Residues 133-137 (HLKSH) carry the Copper-binding motif. H160 and W207 together coordinate glutathione. L-ascorbate is bound at residue K210.

It belongs to the GST superfamily. DHAR family. In terms of assembly, monomer. Interacts with copper (Cu). In terms of processing, spontaneous S-glutathionylation in the presence of oxidized glutathione (GSSG). Expressed at least in roots and leaves.

It is found in the mitochondrion. Its subcellular location is the cytoplasm. It localises to the cytosol. The protein resides in the peroxisome. The protein localises to the membrane. It carries out the reaction RX + glutathione = an S-substituted glutathione + a halide anion + H(+). It catalyses the reaction L-dehydroascorbate + 2 glutathione = glutathione disulfide + L-ascorbate. Its function is as follows. Displays a dual function. As a soluble protein, exhibits glutathione-dependent thiol transferase and dehydroascorbate (DHA) reductase activities. Key component of the ascorbate recycling system. Involved in the redox homeostasis, especially in scavenging of ROS under oxidative stresses, subsequently to biotic or abiotic inducers. As a peripheral membrane protein, could also function as voltage-gated ion channel. The polypeptide is Glutathione S-transferase DHAR1, mitochondrial (Arabidopsis thaliana (Mouse-ear cress)).